Reading from the N-terminus, the 166-residue chain is MALYEHVFLARQDLSQQQVDALVEQYKGVISANGGSVGRVENWGLKSLTYRVNKNRKAYYTLMDLNCPPAALNEMERQMGLSEDVLRFLTIKVEAHEEGPSAMMQKREERSERGSFGDRDRGDRGPRSFGDRDRGDRGDRPPRSFGDAGGDRGPRRPREGFEGGAE.

2 stretches are compositionally biased toward basic and acidic residues: residues 96-142 (HEEG…DRPP) and 149-166 (GGDRGPRRPREGFEGGAE). A disordered region spans residues 96 to 166 (HEEGPSAMMQ…PREGFEGGAE (71 aa)).

It belongs to the bacterial ribosomal protein bS6 family.

Its function is as follows. Binds together with bS18 to 16S ribosomal RNA. This Mesorhizobium japonicum (strain LMG 29417 / CECT 9101 / MAFF 303099) (Mesorhizobium loti (strain MAFF 303099)) protein is Small ribosomal subunit protein bS6.